Here is a 382-residue protein sequence, read N- to C-terminus: tRNA (guanine(26)-N(2))-dimethyltransferase (382 aa).

The region spanning 4 to 373 (VEIIEGKARI…KNLDEIKECI (370 aa)) is the Trm1 methyltransferase domain. The S-adenosyl-L-methionine site is built by Arg-44, Arg-69, and Asp-87. 4 residues coordinate Zn(2+): Cys-246, Cys-249, Cys-263, and Cys-266.

Belongs to the class I-like SAM-binding methyltransferase superfamily. Trm1 family.

It carries out the reaction guanosine(26) in tRNA + 2 S-adenosyl-L-methionine = N(2)-dimethylguanosine(26) in tRNA + 2 S-adenosyl-L-homocysteine + 2 H(+). Functionally, dimethylates a single guanine residue at position 26 of a number of tRNAs using S-adenosyl-L-methionine as donor of the methyl groups. The protein is tRNA (guanine(26)-N(2))-dimethyltransferase of Sulfolobus acidocaldarius (strain ATCC 33909 / DSM 639 / JCM 8929 / NBRC 15157 / NCIMB 11770).